The primary structure comprises 407 residues: Arginine deiminase (407 aa).

Catalysis depends on Cys-397, which acts as the Amidino-cysteine intermediate.

It belongs to the arginine deiminase family.

It localises to the cytoplasm. The catalysed reaction is L-arginine + H2O = L-citrulline + NH4(+). It functions in the pathway amino-acid degradation; L-arginine degradation via ADI pathway; carbamoyl phosphate from L-arginine: step 1/2. In Escherichia coli O6:H1 (strain CFT073 / ATCC 700928 / UPEC), this protein is Arginine deiminase (arcA).